A 158-amino-acid chain; its full sequence is NAD(P)H-quinone oxidoreductase subunit N (158 aa).

Belongs to the complex I NdhN subunit family. In terms of assembly, NDH-1 can be composed of about 15 different subunits; different subcomplexes with different compositions have been identified which probably have different functions.

The protein localises to the cellular thylakoid membrane. It catalyses the reaction a plastoquinone + NADH + (n+1) H(+)(in) = a plastoquinol + NAD(+) + n H(+)(out). The catalysed reaction is a plastoquinone + NADPH + (n+1) H(+)(in) = a plastoquinol + NADP(+) + n H(+)(out). Functionally, NDH-1 shuttles electrons from an unknown electron donor, via FMN and iron-sulfur (Fe-S) centers, to quinones in the respiratory and/or the photosynthetic chain. The immediate electron acceptor for the enzyme in this species is believed to be plastoquinone. Couples the redox reaction to proton translocation, and thus conserves the redox energy in a proton gradient. Cyanobacterial NDH-1 also plays a role in inorganic carbon-concentration. This chain is NAD(P)H-quinone oxidoreductase subunit N, found in Cyanothece sp. (strain PCC 7425 / ATCC 29141).